The sequence spans 327 residues: Cytochrome P450 2C42 (327 aa).

Position 272 (C272) interacts with heme.

It belongs to the cytochrome P450 family. Heme is required as a cofactor.

It localises to the endoplasmic reticulum membrane. Its subcellular location is the microsome membrane. It catalyses the reaction an organic molecule + reduced [NADPH--hemoprotein reductase] + O2 = an alcohol + oxidized [NADPH--hemoprotein reductase] + H2O + H(+). Its function is as follows. Cytochromes P450 are a group of heme-thiolate monooxygenases. In liver microsomes, this enzyme is involved in an NADPH-dependent electron transport pathway. It oxidizes a variety of structurally unrelated compounds, including steroids, fatty acids, and xenobiotics. This is Cytochrome P450 2C42 (CYP2C42) from Sus scrofa (Pig).